Here is a 324-residue protein sequence, read N- to C-terminus: Lactonase drp35 (324 aa).

10 residues coordinate Ca(2+): glutamate 47, serine 109, glycine 111, aspartate 129, threonine 132, tyrosine 134, aspartate 137, asparagine 184, aspartate 235, and serine 236. Aspartate 235 acts as the Proton donor in catalysis.

Belongs to the SMP-30/CGR1 family. Ca(2+) is required as a cofactor.

The protein resides in the cytoplasm. Its function is as follows. Exhibits lactonase activity. Acts in cells with perturbed membrane integrity and is possibly related to the membrane homeostasis. The sequence is that of Lactonase drp35 (drp35) from Staphylococcus aureus (strain bovine RF122 / ET3-1).